The chain runs to 135 residues: Large ribosomal subunit protein eL27 (135 aa).

It belongs to the eukaryotic ribosomal protein eL27 family.

This chain is Large ribosomal subunit protein eL27 (RPL27), found in Pisum sativum (Garden pea).